Here is an 86-residue protein sequence, read N- to C-terminus: Small ribosomal subunit protein bS16 (86 aa).

Belongs to the bacterial ribosomal protein bS16 family.

This chain is Small ribosomal subunit protein bS16, found in Borrelia garinii subsp. bavariensis (strain ATCC BAA-2496 / DSM 23469 / PBi) (Borreliella bavariensis).